Reading from the N-terminus, the 459-residue chain is GTPase Der (459 aa).

EngA-type G domains lie at 3–167 and 188–363; these read FTFA…PEPE and IRVA…AVWN. GTP-binding positions include 9–16, 56–60, 119–122, 194–201, 241–245, and 306–309; these read GRPNVGKS, DTAGL, NKSE, GRPNAGKS, and NKWD. In terms of domain architecture, KH-like spans 364–448; that stretch reads TRVSTAALNR…PVRITLREKA (85 aa).

Belongs to the TRAFAC class TrmE-Era-EngA-EngB-Septin-like GTPase superfamily. EngA (Der) GTPase family. In terms of assembly, associates with the 50S ribosomal subunit.

GTPase that plays an essential role in the late steps of ribosome biogenesis. The chain is GTPase Der from Rhodopseudomonas palustris (strain HaA2).